Here is a 618-residue protein sequence, read N- to C-terminus: DNA mismatch repair protein MutL (618 aa).

Positions 371–401 (AREPATPRYSGGASGGSGGRQSVGGWSHAQP) are disordered. Positions 382-392 (GASGGSGGRQS) are enriched in gly residues.

It belongs to the DNA mismatch repair MutL/HexB family.

This protein is involved in the repair of mismatches in DNA. It is required for dam-dependent methyl-directed DNA mismatch repair. May act as a 'molecular matchmaker', a protein that promotes the formation of a stable complex between two or more DNA-binding proteins in an ATP-dependent manner without itself being part of a final effector complex. The sequence is that of DNA mismatch repair protein MutL from Salmonella arizonae (strain ATCC BAA-731 / CDC346-86 / RSK2980).